Here is an 83-residue protein sequence, read N- to C-terminus: uncharacterized protein (83 aa).

Transmembrane regions (helical) follow at residues A4 to M24, I32 to F52, and Y54 to G74.

Its subcellular location is the cell membrane. This is an uncharacterized protein from Methanocaldococcus jannaschii (strain ATCC 43067 / DSM 2661 / JAL-1 / JCM 10045 / NBRC 100440) (Methanococcus jannaschii).